The chain runs to 641 residues: Choline O-acetyltransferase (641 aa).

Residue serine 17 is modified to Phosphoserine. The active-site Proton acceptor is histidine 335. Serine 366 is modified (phosphoserine). CoA is bound by residues glycine 413 to aspartate 425, serine 451, and glutamine 552. Residues cysteine 615–serine 641 are disordered.

Belongs to the carnitine/choline acetyltransferase family.

The catalysed reaction is choline + acetyl-CoA = acetylcholine + CoA. Catalyzes the reversible synthesis of acetylcholine (ACh) from acetyl CoA and choline at cholinergic synapses. In Mus musculus (Mouse), this protein is Choline O-acetyltransferase (Chat).